The primary structure comprises 475 residues: ATP synthase subunit beta (475 aa).

An ATP-binding site is contributed by 160 to 167 (GGAGVGKT).

It belongs to the ATPase alpha/beta chains family. F-type ATPases have 2 components, CF(1) - the catalytic core - and CF(0) - the membrane proton channel. CF(1) has five subunits: alpha(3), beta(3), gamma(1), delta(1), epsilon(1). CF(0) has three main subunits: a(1), b(2) and c(9-12). The alpha and beta chains form an alternating ring which encloses part of the gamma chain. CF(1) is attached to CF(0) by a central stalk formed by the gamma and epsilon chains, while a peripheral stalk is formed by the delta and b chains.

The protein localises to the cell membrane. The catalysed reaction is ATP + H2O + 4 H(+)(in) = ADP + phosphate + 5 H(+)(out). In terms of biological role, produces ATP from ADP in the presence of a proton gradient across the membrane. The catalytic sites are hosted primarily by the beta subunits. The sequence is that of ATP synthase subunit beta from Mycolicibacterium vanbaalenii (strain DSM 7251 / JCM 13017 / BCRC 16820 / KCTC 9966 / NRRL B-24157 / PYR-1) (Mycobacterium vanbaalenii).